Reading from the N-terminus, the 285-residue chain is MTATLIDGNALSKTLRAQAAERAAALAARGHQPGLAVILVGDNPASEVYVRNKIKACEDNGFFSLKDRYPATLSEPELLARIDELNRDPKIHGILVQLPLPAHIDSHKVIEAIAPEKDVDGFHVANAGALLTGKPLFRPCTPYGVMKMFEAYKIPLQGANAVVIGRSNIVGKPMALLLLEAGATVTICHSKTRELAAHTRAADIVVAAVGKRNVLTADMVKPGATVIDVGMNRNDEGKLCGDVDFAGVSQVAGHITPVPGGVGPMTITMLLVNTIEAAERAAAAA.

Residues 165–167 (GRS) and Ser-190 each bind NADP(+).

The protein belongs to the tetrahydrofolate dehydrogenase/cyclohydrolase family. Homodimer.

It catalyses the reaction (6R)-5,10-methylene-5,6,7,8-tetrahydrofolate + NADP(+) = (6R)-5,10-methenyltetrahydrofolate + NADPH. It carries out the reaction (6R)-5,10-methenyltetrahydrofolate + H2O = (6R)-10-formyltetrahydrofolate + H(+). It participates in one-carbon metabolism; tetrahydrofolate interconversion. Functionally, catalyzes the oxidation of 5,10-methylenetetrahydrofolate to 5,10-methenyltetrahydrofolate and then the hydrolysis of 5,10-methenyltetrahydrofolate to 10-formyltetrahydrofolate. This is Bifunctional protein FolD from Burkholderia pseudomallei (strain 1106a).